The sequence spans 1206 residues: DNA-directed RNA polymerase subunit beta' (1206 aa).

Residues C60, C62, C75, and C78 each contribute to the Zn(2+) site. Mg(2+)-binding residues include D449, D451, and D453. C822, C896, C903, and C906 together coordinate Zn(2+).

This sequence belongs to the RNA polymerase beta' chain family. The RNAP catalytic core consists of 2 alpha, 1 beta, 1 beta' and 1 omega subunit. When a sigma factor is associated with the core the holoenzyme is formed, which can initiate transcription. Requires Mg(2+) as cofactor. Zn(2+) serves as cofactor.

It carries out the reaction RNA(n) + a ribonucleoside 5'-triphosphate = RNA(n+1) + diphosphate. Its function is as follows. DNA-dependent RNA polymerase catalyzes the transcription of DNA into RNA using the four ribonucleoside triphosphates as substrates. In Staphylococcus haemolyticus (strain JCSC1435), this protein is DNA-directed RNA polymerase subunit beta'.